A 50-amino-acid polypeptide reads, in one-letter code: uncharacterized protein (50 aa).

It is found in the mitochondrion. This is an uncharacterized protein from Saccharomyces cerevisiae (strain ATCC 204508 / S288c) (Baker's yeast).